A 251-amino-acid polypeptide reads, in one-letter code: Derlin-1 (251 aa).

N-acetylserine is present on Ser-2. At 2–15 the chain is on the cytoplasmic side; it reads SDIGDWFRSIPAIT. Residues 16 to 31 form a helical membrane-spanning segment; the sequence is RYWFAATVAVPLIGKL. The Lumenal portion of the chain corresponds to 32-69; that stretch reads GIISPAYFFLWPEAFLYRFQIWRPFTATFYFPVGPGTG. A helical transmembrane segment spans residues 70-89; sequence FLYLVNLYFLYQYSTRLEAG. Over 90-94 the chain is Cytoplasmic; it reads AFDGR. The helical transmembrane segment at 95–115 threads the bilayer; the sequence is PADYLFMLLFNWICIVITGLA. The Lumenal portion of the chain corresponds to 116-122; it reads MDMQLLM. Residues 123-137 form a helical membrane-spanning segment; that stretch reads IPLIMSVLYVWAQLN. Residues 138–154 are Cytoplasmic-facing; the sequence is RDLIVSFWFGTRFKACY. Residues 155–166 form a helical membrane-spanning segment; the sequence is LPWVILGFNYII. Topologically, residues 167–170 are lumenal; that stretch reads GGSV. A helical transmembrane segment spans residues 171–189; that stretch reads INELIGNLVGHLYFFLMFR. Over 190–251 the chain is Cytoplasmic; that stretch reads YPMDLGGRNF…WGQGFRLGDQ (62 aa). Ser-201 bears the Phosphoserine mark. Thr-202 carries the phosphothreonine modification. Ser-226 carries the phosphoserine modification. The tract at residues 229–251 is disordered; the sequence is RAADQNGGGGRHNWGQGFRLGDQ. The SHP-box motif lies at 241-248; sequence NWGQGFRL.

The protein belongs to the derlin family. As to quaternary structure, homotetramer. The four subunits of the tetramer are arranged in a twofold symmetry. Forms homo- and heterooligomers with DERL2 and DERL3; binding to DERL3 is poorer than that between DERL2 and DERL3. Interacts (via SHP-box motif) with VCP. Interacts with AMFR, SELENOS, SEL1L, SELENOK and SYVN1, as well as with SEL1L-SYVN1 and VCP-SELENOS protein complexes; this interaction is weaker than that observed between DERL2 and these complexes. Interacts with NGLY1 and YOD1. Does not bind to EDEM1. Interacts with DNAJB9. Interacts with RNF103. Interacts with HM13. Interacts with XBP1 isoform 1 (via luminal/ectodomain domain); the interaction obviates the need for ectodomain shedding prior HM13/SPP-mediated XBP1 isoform 1 cleavage. Interacts with the signal recognition particle/SRP and the SRP receptor; in the process of endoplasmic reticulum stress-induced pre-emptive quality control. May interact with UBXN6. Interacts with ZFAND2B; probably through VCP. Interacts with CCDC47. Interacts with C18orf32. May interact with TRAM1. Forms a complex with SVIP and VCP/p97. As to expression, widely expressed, with lowest levels in brain and heart.

The protein resides in the endoplasmic reticulum membrane. Its function is as follows. Functional component of endoplasmic reticulum-associated degradation (ERAD) for misfolded lumenal proteins. Forms homotetramers which encircle a large channel traversing the endoplasmic reticulum (ER) membrane. This allows the retrotranslocation of misfolded proteins from the ER into the cytosol where they are ubiquitinated and degraded by the proteasome. The channel has a lateral gate within the membrane which provides direct access to membrane proteins with no need to reenter the ER lumen first. May mediate the interaction between VCP and the misfolded protein. Also involved in endoplasmic reticulum stress-induced pre-emptive quality control, a mechanism that selectively attenuates the translocation of newly synthesized proteins into the endoplasmic reticulum and reroutes them to the cytosol for proteasomal degradation. By controlling the steady-state expression of the IGF1R receptor, indirectly regulates the insulin-like growth factor receptor signaling pathway. The sequence is that of Derlin-1 from Mus musculus (Mouse).